The chain runs to 534 residues: (R)-citramalate synthase (534 aa).

Positions 11–274 (FHVFDTTLRD…KQVLPEGRLR (264 aa)) constitute a Pyruvate carboxyltransferase domain.

The protein belongs to the alpha-IPM synthase/homocitrate synthase family.

The catalysed reaction is pyruvate + acetyl-CoA + H2O = (3R)-citramalate + CoA + H(+). It functions in the pathway amino-acid biosynthesis; L-isoleucine biosynthesis; 2-oxobutanoate from pyruvate: step 1/3. Its function is as follows. Catalyzes the condensation of pyruvate and acetyl-coenzyme A to form (R)-citramalate. The protein is (R)-citramalate synthase of Streptomyces coelicolor (strain ATCC BAA-471 / A3(2) / M145).